Here is a 254-residue protein sequence, read N- to C-terminus: Alcohol dehydrogenase (254 aa).

10 to 33 contributes to the NAD(+) binding site; it reads FVAGLGGIGLDTSREIVKSGPKNL. Position 138 (serine 138) interacts with substrate. Residue tyrosine 151 is the Proton acceptor of the active site.

It belongs to the short-chain dehydrogenases/reductases (SDR) family. As to quaternary structure, homodimer.

The enzyme catalyses a primary alcohol + NAD(+) = an aldehyde + NADH + H(+). It carries out the reaction a secondary alcohol + NAD(+) = a ketone + NADH + H(+). The sequence is that of Alcohol dehydrogenase (Adh) from Drosophila flavomontana (Fruit fly).